We begin with the raw amino-acid sequence, 128 residues long: Small ribosomal subunit protein uS14m (128 aa).

The protein belongs to the universal ribosomal protein uS14 family. As to quaternary structure, component of the mitochondrial ribosome small subunit (28S) which comprises a 12S rRNA and about 30 distinct proteins. Interacts with LIAT1.

The protein localises to the mitochondrion. The polypeptide is Small ribosomal subunit protein uS14m (Mrps14) (Mus musculus (Mouse)).